A 479-amino-acid chain; its full sequence is Cysteine--tRNA ligase (479 aa).

C28 provides a ligand contact to Zn(2+). Positions 30-40 match the 'HIGH' region motif; sequence PTVYDHAHLGH. Residues C207, H232, and E236 each coordinate Zn(2+). The short motif at 264–268 is the 'KMSKS' region element; sequence KMSKS. K267 is a binding site for ATP.

It belongs to the class-I aminoacyl-tRNA synthetase family. Requires Zn(2+) as cofactor.

The protein resides in the cytoplasm. It catalyses the reaction tRNA(Cys) + L-cysteine + ATP = L-cysteinyl-tRNA(Cys) + AMP + diphosphate. This chain is Cysteine--tRNA ligase, found in Methanococcus aeolicus (strain ATCC BAA-1280 / DSM 17508 / OCM 812 / Nankai-3).